Here is a 157-residue protein sequence, read N- to C-terminus: ATP synthase subunit delta (157 aa).

Belongs to the ATPase delta chain family. As to quaternary structure, F-type ATPases have 2 components, F(1) - the catalytic core - and F(0) - the membrane proton channel. F(1) has five subunits: alpha(3), beta(3), gamma(1), delta(1), epsilon(1). F(0) has three main subunits: a(1), b(2) and c(10-14). The alpha and beta chains form an alternating ring which encloses part of the gamma chain. F(1) is attached to F(0) by a central stalk formed by the gamma and epsilon chains, while a peripheral stalk is formed by the delta and b chains.

It localises to the cell membrane. F(1)F(0) ATP synthase produces ATP from ADP in the presence of a proton or sodium gradient. F-type ATPases consist of two structural domains, F(1) containing the extramembraneous catalytic core and F(0) containing the membrane proton channel, linked together by a central stalk and a peripheral stalk. During catalysis, ATP synthesis in the catalytic domain of F(1) is coupled via a rotary mechanism of the central stalk subunits to proton translocation. In terms of biological role, this protein is part of the stalk that links CF(0) to CF(1). It either transmits conformational changes from CF(0) to CF(1) or is implicated in proton conduction. This chain is ATP synthase subunit delta, found in Chloroflexus aggregans (strain MD-66 / DSM 9485).